The following is a 63-amino-acid chain: Large ribosomal subunit protein uL29 (63 aa).

The protein belongs to the universal ribosomal protein uL29 family.

The polypeptide is Large ribosomal subunit protein uL29 (Idiomarina loihiensis (strain ATCC BAA-735 / DSM 15497 / L2-TR)).